The chain runs to 477 residues: Transposase for insertion sequence element IS231F (477 aa).

Belongs to the transposase 11 family.

In terms of biological role, involved in the transposition of the insertion sequence. This Bacillus thuringiensis subsp. israelensis protein is Transposase for insertion sequence element IS231F.